Here is a 699-residue protein sequence, read N- to C-terminus: Cysteine--tRNA ligase (699 aa).

The unknown stretch occupies residues 1–226; sequence MTTITEKRLT…SEQQRLIHNP (226 aa). Residue cysteine 254 coordinates Zn(2+). A 'HIGH' region motif is present at residues 256-266; it reads MTVYDYCHLGH. Zn(2+) is bound by residues cysteine 435, histidine 460, and glutamate 464. The short motif at 508 to 512 is the 'KMSKS' region element; that stretch reads KMSKS. Position 511 (lysine 511) interacts with ATP.

The protein belongs to the class-I aminoacyl-tRNA synthetase family. As to quaternary structure, monomer. Zn(2+) is required as a cofactor.

Its subcellular location is the cytoplasm. The enzyme catalyses tRNA(Cys) + L-cysteine + ATP = L-cysteinyl-tRNA(Cys) + AMP + diphosphate. The chain is Cysteine--tRNA ligase (cysS) from Neisseria meningitidis serogroup A / serotype 4A (strain DSM 15465 / Z2491).